Here is a 300-residue protein sequence, read N- to C-terminus: uncharacterized protein (300 aa).

In terms of domain architecture, HTH lysR-type spans 10–67 (FDLNLLVIFECIYQHLSISKAAESLYITPSAVSQSLQRLRAQFNDPLFIRSGKGIAPT). The segment at residues 27–46 (ISKAAESLYITPSAVSQSLQ) is a DNA-binding region (H-T-H motif).

The protein belongs to the LysR transcriptional regulatory family.

This is an uncharacterized protein from Escherichia coli (strain K12).